The primary structure comprises 565 residues: MKATQTLIATTKELPKEAVLTSHQYMLKAGLIKKLASGIYTWMPIGLKVLQKIQNIVREEMNKAGASELLLPSVLPSELLQETHRWDKFGPELLKLKDRHERDFCYGPTHEEPIVDMARDTIKSYKQLPLNLYQIQTKFRDEIRPRFGVMRAREFIMKDAYSFHENSECLHNTYNKMHETYCNILDKIGLVYRPVRADTGAIGGDNSHEFQVLANAGEDIICYSNGSDYAANIELATYAKPDLSTRAVSENTITKIHTPNIKTIEKLCTELDFDIKKTIKTMVIKDAKGNFFALVIRGDHELNETKINKLEQIVAPYTLATKDEIFSIFNANPGSLGIVNCPVQIIADYSAMMIEDICCGANEDDYHFTNVNWGRDITSYQIADIRNVVTGDISPDNNGTLELTNGIEVGHIFELEDVYSKPMNANIIGQDGKSKPMLMGCYGFGVSRVMAAAIEQSHDENGIIWPETIAPYQVAILPINYNKSESVKQTADKLYQELLVKGIDVILDDRGARPGVMFADADLIGFSHHVVIGDRLLEQGLVEYKNRKTQEKQEIRLEKLFDILA.

The protein belongs to the class-II aminoacyl-tRNA synthetase family. ProS type 1 subfamily. In terms of assembly, homodimer.

The protein localises to the cytoplasm. The enzyme catalyses tRNA(Pro) + L-proline + ATP = L-prolyl-tRNA(Pro) + AMP + diphosphate. Functionally, catalyzes the attachment of proline to tRNA(Pro) in a two-step reaction: proline is first activated by ATP to form Pro-AMP and then transferred to the acceptor end of tRNA(Pro). As ProRS can inadvertently accommodate and process non-cognate amino acids such as alanine and cysteine, to avoid such errors it has two additional distinct editing activities against alanine. One activity is designated as 'pretransfer' editing and involves the tRNA(Pro)-independent hydrolysis of activated Ala-AMP. The other activity is designated 'posttransfer' editing and involves deacylation of mischarged Ala-tRNA(Pro). The misacylated Cys-tRNA(Pro) is not edited by ProRS. In Francisella philomiragia subsp. philomiragia (strain ATCC 25017 / CCUG 19701 / FSC 153 / O#319-036), this protein is Proline--tRNA ligase.